The chain runs to 226 residues: UPF0319 protein SO_1816 (226 aa).

The N-terminal stretch at 1–21 (MKSLLPISSLLVLLGSASVSA) is a signal peptide.

The protein belongs to the UPF0319 family.

The polypeptide is UPF0319 protein SO_1816 (Shewanella oneidensis (strain ATCC 700550 / JCM 31522 / CIP 106686 / LMG 19005 / NCIMB 14063 / MR-1)).